Reading from the N-terminus, the 531-residue chain is Lysine--tRNA ligase, mitochondrial (531 aa).

The transit peptide at 1 to 18 directs the protein to the mitochondrion; the sequence is MISRGLLSKGILSIIKRK.

The protein belongs to the class-II aminoacyl-tRNA synthetase family.

Its subcellular location is the mitochondrion. The catalysed reaction is tRNA(Lys) + L-lysine + ATP = L-lysyl-tRNA(Lys) + AMP + diphosphate. The protein is Lysine--tRNA ligase, mitochondrial (msk1) of Schizosaccharomyces pombe (strain 972 / ATCC 24843) (Fission yeast).